The chain runs to 287 residues: Large ribosomal subunit protein uL2 (287 aa).

A disordered region spans residues 221–287; the sequence is RGSVMNPCDH…SKRSRGGRDS (67 aa). Residues 258-287 are compositionally biased toward basic residues; it reads KTRKRNKPSNRFVLRKRRRVSKRSRGGRDS.

This sequence belongs to the universal ribosomal protein uL2 family. In terms of assembly, part of the 50S ribosomal subunit. Forms a bridge to the 30S subunit in the 70S ribosome.

Its function is as follows. One of the primary rRNA binding proteins. Required for association of the 30S and 50S subunits to form the 70S ribosome, for tRNA binding and peptide bond formation. It has been suggested to have peptidyltransferase activity; this is somewhat controversial. Makes several contacts with the 16S rRNA in the 70S ribosome. The chain is Large ribosomal subunit protein uL2 from Prochlorococcus marinus (strain MIT 9211).